A 915-amino-acid polypeptide reads, in one-letter code: MAVEDMDKKYRISDIARELQVSPQEVLRFVKEGGAKVASTSSMVDSEMRGLIFAEFSNEKKMVDETRKIRAEKQLRLTRLEEQSRRAVEKEQILRETLTPSPAPPVHEPPVRAAAQPAPVPVAAGEAPSPLAPETPAPATESAPAVAPAGVPAAEPVSEALSAPLPEPVPEPVPEPPAPEVVAVVEAVPNDQIVSYDAPKNIGGLTVLGTLDMQSEADRKKKGKKKNFREQAVALKDEFETPSSTTLDEDGVPKKKPVAGVQPEGFGVGKKKGKKKKPAVDDKVISANIRTTISGMDDSSGTGSRSKFRKQRKMEREREQEEADLLRESEQQIMRVTEYASPHELAELMGVTAKDIIQKCFALGKFVTINQRLDKESIELIALEFGFEAEFISEVEATAVEAVVDRDEDLETRPPVVTIMGHVDHGKTSLLDYIRNSNVVAGESGGITQHVAAYEVTASNGRKITFLDTPGHEAFTAMRARGAQVTDIVILVVAADDSVMPQTIEAINHAKAAGVPIVVAINKMDKPEANPEKIKTQLSEAGVLVEEWGGESQCQEISAKKGLGIEELMEKVLTEAEMRELKGNFSKDVPATGVIVESELDKGKGVISAVLVQRGYLKVGDPFVAGNIMGKVRALMDERGKRIPSAGPSQPVSVLGFEDLPQAGDVLTVMASDKEARDLAQKRQIIRREHEFRRSTRVKLDSIARQIKEGLMKELSVIIKADTDGSIQALADGLMKIQNEEVKVQIIHQGVGQITETDVLLAAASDAIIIGFRVRPNVNAKKLAEKEDLDVRFYSVIYHVLEDVEKALEGMLSPELHEESLGSLEIRQVFRVPKVGNVGGCHVLEGKILRDAKVRLLRDGVQIYDGMLDTLRRFKDDVKEVDAGYECGVGLKNYDDIKVGDVVEAYRIVEKKRKL.

Over residues 83-94 (QSRRAVEKEQIL) the composition is skewed to basic and acidic residues. 3 disordered regions span residues 83–177 (QSRR…PEPP), 216–280 (EADR…KPAV), and 293–328 (ISGM…LLRE). Low complexity-rich tracts occupy residues 111 to 129 (VRAA…EAPS) and 137 to 164 (APAT…LSAP). Residues 165-177 (LPEPVPEPVPEPP) are compositionally biased toward pro residues. Residues 293–305 (ISGMDDSSGTGSR) show a composition bias toward polar residues. Positions 314 to 328 (MEREREQEEADLLRE) are enriched in basic and acidic residues. One can recognise a tr-type G domain in the interval 412–582 (TRPPVVTIMG…LTEAEMRELK (171 aa)). Residues 421–428 (GHVDHGKT) are G1. Residue 421–428 (GHVDHGKT) participates in GTP binding. The tract at residues 446-450 (GITQH) is G2. The G3 stretch occupies residues 468–471 (DTPG). GTP contacts are provided by residues 468-472 (DTPGH) and 522-525 (NKMD). The G4 stretch occupies residues 522 to 525 (NKMD). Residues 558–560 (SAK) are G5.

The protein belongs to the TRAFAC class translation factor GTPase superfamily. Classic translation factor GTPase family. IF-2 subfamily.

The protein localises to the cytoplasm. In terms of biological role, one of the essential components for the initiation of protein synthesis. Protects formylmethionyl-tRNA from spontaneous hydrolysis and promotes its binding to the 30S ribosomal subunits. Also involved in the hydrolysis of GTP during the formation of the 70S ribosomal complex. The polypeptide is Translation initiation factor IF-2 (Chlorobium luteolum (strain DSM 273 / BCRC 81028 / 2530) (Pelodictyon luteolum)).